A 279-amino-acid polypeptide reads, in one-letter code: MPEYVREKLTLNFPLVTEYLVKRIKDYINNSGKSGGIIGLSGGIDSSVASVLLSKATENFHVLLMPSSSTPKEDLDHAFMILRLINATESKYTIINIDPIVDQFRLAVKTNDKIISGNIKARSRMILLYAFAQKFNYLVVGTGDKSELMLGYFTKYGDGGVDILPLGDLYKTQVRMLGRYLGVPEDIVKKPPSPALWEGQTAEGEIGLDYETIDSILYLRFEEMRSENEISALVNVPIDLVRRIVRMVKISQHKRLPPEIFRLSGRSINSDWRYPRQWA.

39 to 46 contributes to the ATP binding site; that stretch reads GLSGGIDS. Residue D45 participates in Mg(2+) binding. A deamido-NAD(+)-binding site is contributed by R122. T142 contacts ATP. Residue E147 participates in Mg(2+) binding. Deamido-NAD(+)-binding residues include K155 and D162. Positions 171 and 193 each coordinate ATP. 253-254 is a deamido-NAD(+) binding site; that stretch reads HK.

Belongs to the NAD synthetase family. As to quaternary structure, homodimer.

It catalyses the reaction deamido-NAD(+) + NH4(+) + ATP = AMP + diphosphate + NAD(+) + H(+). It participates in cofactor biosynthesis; NAD(+) biosynthesis; NAD(+) from deamido-NAD(+) (ammonia route): step 1/1. In terms of biological role, catalyzes the ATP-dependent amidation of deamido-NAD to form NAD. Uses ammonia as a nitrogen source. This is NH(3)-dependent NAD(+) synthetase from Sulfolobus acidocaldarius (strain ATCC 33909 / DSM 639 / JCM 8929 / NBRC 15157 / NCIMB 11770).